Reading from the N-terminus, the 204-residue chain is phospholipase A2 inhibitor and Ly6/PLAUR domain-containing protein (204 aa).

The N-terminal stretch at 1-26 (MRLSRRPETFLLAFVLLCTLLGLGCP) is a signal peptide. One can recognise a UPAR/Ly6 domain in the interval 27–117 (LHCEICTAAG…NSAFLSVPLT (91 aa)). 7 disulfide bridges follow: C29–C53, C32–C39, C46–C74, C80–C101, C102–C107, C126–C151, and C144–C172.

The protein belongs to the CNF-like-inhibitor family.

The protein localises to the secreted. In Homo sapiens (Human), this protein is phospholipase A2 inhibitor and Ly6/PLAUR domain-containing protein (PINLYP).